Reading from the N-terminus, the 184-residue chain is Large ribosomal subunit protein uL6 (184 aa).

Belongs to the universal ribosomal protein uL6 family. As to quaternary structure, part of the 50S ribosomal subunit.

Its function is as follows. This protein binds to the 23S rRNA, and is important in its secondary structure. It is located near the subunit interface in the base of the L7/L12 stalk, and near the tRNA binding site of the peptidyltransferase center. In Thermotoga neapolitana (strain ATCC 49049 / DSM 4359 / NBRC 107923 / NS-E), this protein is Large ribosomal subunit protein uL6.